A 165-amino-acid polypeptide reads, in one-letter code: Transcription antitermination protein NusB (165 aa).

The disordered stretch occupies residues methionine 1–arginine 27. A compositionally biased stretch (basic and acidic residues) spans asparagine 10–lysine 21.

This sequence belongs to the NusB family.

Functionally, involved in transcription antitermination. Required for transcription of ribosomal RNA (rRNA) genes. Binds specifically to the boxA antiterminator sequence of the ribosomal RNA (rrn) operons. This Pseudomonas savastanoi pv. phaseolicola (strain 1448A / Race 6) (Pseudomonas syringae pv. phaseolicola (strain 1448A / Race 6)) protein is Transcription antitermination protein NusB.